A 339-amino-acid polypeptide reads, in one-letter code: DNA-directed RNA polymerase subunit alpha (339 aa).

Residues 1–233 (MVREEVAGST…DLFLPFLHAE (233 aa)) form an alpha N-terminal domain (alpha-NTD) region. The interval 264 to 339 (KKGIPLNCIF…IDLLKNKLSF (76 aa)) is alpha C-terminal domain (alpha-CTD).

The protein belongs to the RNA polymerase alpha chain family. In plastids the minimal PEP RNA polymerase catalytic core is composed of four subunits: alpha, beta, beta', and beta''. When a (nuclear-encoded) sigma factor is associated with the core the holoenzyme is formed, which can initiate transcription.

The protein resides in the plastid. It localises to the chloroplast. The catalysed reaction is RNA(n) + a ribonucleoside 5'-triphosphate = RNA(n+1) + diphosphate. In terms of biological role, DNA-dependent RNA polymerase catalyzes the transcription of DNA into RNA using the four ribonucleoside triphosphates as substrates. This Psathyrostachys fragilis (Russian wild rye) protein is DNA-directed RNA polymerase subunit alpha.